Here is a 242-residue protein sequence, read N- to C-terminus: Flavin prenyltransferase PAD1, mitochondrial (242 aa).

Residues 1–58 constitute a mitochondrion transit peptide; it reads MLLFPRRTNIAFFKTTGIFANFPLLGRTITTSPSFLTHKLSKEVTRASTSPPRPKRIV. Residues 63 to 65, serine 89, 140 to 143, and arginine 175 contribute to the FMN site; these read GAT and SMKS. Dimethylallyl phosphate contacts are provided by tyrosine 205 and arginine 221.

Belongs to the UbiX/PAD1 family. As to quaternary structure, oligomer.

The protein localises to the mitochondrion. The enzyme catalyses dimethylallyl phosphate + FMNH2 = prenylated FMNH2 + phosphate. Functionally, flavin prenyltransferase that catalyzes the synthesis of the prenylated FMN cofactor (prenyl-FMN) for the ferulic acid decarboxylase FDC1/ubiD. The prenyltransferase is metal-independent and links a dimethylallyl moiety from dimethylallyl monophosphate (DMAP) to the flavin N5 and C6 atoms of FMN. Involved in the decarboxylation of phenylacrylic acids like ferulic acid, p-coumaric acid or cinnamic acid, producing the corresponding vinyl derivatives which play the role of aroma metabolites. Also involved in the degradation of the food preservative sorbic acid (2,4-hexadienoic acid) to a volatile hydrocarbon, 1,3-pentadiene. Not essential for ubiquinone synthesis. Can rescue Q biosynthesis in E.coli strains lacking UbiX. Has mRNA binding activity. This chain is Flavin prenyltransferase PAD1, mitochondrial, found in Saccharomyces cerevisiae (strain ATCC 204508 / S288c) (Baker's yeast).